Reading from the N-terminus, the 153-residue chain is Nucleoside diphosphate kinase (153 aa).

6 residues coordinate ATP: Lys9, Phe57, Arg85, Thr91, Arg102, and Asn112. Catalysis depends on His115, which acts as the Pros-phosphohistidine intermediate.

The protein belongs to the NDK family. As to quaternary structure, homotetramer. Requires Mg(2+) as cofactor.

Its subcellular location is the cytoplasm. It catalyses the reaction a 2'-deoxyribonucleoside 5'-diphosphate + ATP = a 2'-deoxyribonucleoside 5'-triphosphate + ADP. The enzyme catalyses a ribonucleoside 5'-diphosphate + ATP = a ribonucleoside 5'-triphosphate + ADP. Functionally, major role in the synthesis of nucleoside triphosphates other than ATP. The ATP gamma phosphate is transferred to the NDP beta phosphate via a ping-pong mechanism, using a phosphorylated active-site intermediate. This Parabacteroides distasonis (strain ATCC 8503 / DSM 20701 / CIP 104284 / JCM 5825 / NCTC 11152) protein is Nucleoside diphosphate kinase.